Reading from the N-terminus, the 95-residue chain is Large ribosomal subunit protein bL25 (95 aa).

The protein belongs to the bacterial ribosomal protein bL25 family. As to quaternary structure, part of the 50S ribosomal subunit; part of the 5S rRNA/L5/L18/L25 subcomplex. Contacts the 5S rRNA. Binds to the 5S rRNA independently of L5 and L18.

In terms of biological role, this is one of the proteins that binds to the 5S RNA in the ribosome where it forms part of the central protuberance. The protein is Large ribosomal subunit protein bL25 of Actinobacillus pleuropneumoniae serotype 3 (strain JL03).